Reading from the N-terminus, the 612-residue chain is Siderophore iron transporter 1 (612 aa).

S5, S21, S22, S36, and S41 each carry phosphoserine. 14 consecutive transmembrane segments (helical) span residues 91–111 (ISFY…SFQA), 125–145 (FAGH…SAAI), 159–179 (LEAF…MAAS), 188–208 (GSVL…IFMA), 218–238 (LVLG…PRVA), 249–269 (WGIA…LAVY), 299–319 (IIGL…ISLA), 331–351 (FIVM…YEIF), 365–385 (EPTI…FYCW), 406–426 (YISY…GILI), 434–453 (WYFV…MIRY), 464–484 (IMPQ…LTVA), 495–515 (AIVT…GSAI), and 573–593 (ILTS…WFVA).

Belongs to the major facilitator superfamily.

It localises to the membrane. Involved in the transport of siderophore iron and so has a role in iron homeostasis. This is Siderophore iron transporter 1 (str1) from Schizosaccharomyces pombe (strain 972 / ATCC 24843) (Fission yeast).